The following is a 3955-amino-acid chain: Nonribosomal peptide synthetase fmqA (3955 aa).

Positions 293–691 are adenylation 1; the sequence is SYSELETLSL…AQACCTIRNV (399 aa). In terms of domain architecture, Carrier 1 spans 806 to 879; that stretch reads THKETLIHQL…DLARLTDVVN (74 aa). Serine 840 carries the O-(pantetheine 4'-phosphoryl)serine modification. Positions 916-1187 are condensation 1; it reads QDIYPCTPLQ…IATVPLRVRL (272 aa). Residues 1371–1766 are adenylation 2; sequence TYAELGELSD…DEVEKHVYQC (396 aa). Residues 1880–1956 enclose the Carrier 2 domain; sequence EPTSVAEREM…KIMSHESSLS (77 aa). O-(pantetheine 4'-phosphoryl)serine is present on serine 1917. Positions 1970–2261 are epimerase; it reads FALSPIQQMF…FTTMWPVVAE (292 aa). The condensation 2 stretch occupies residues 2438 to 2724; it reads EDIYPCSPSQ…FNPLPCRVHL (287 aa). Residues 2906–3299 form an adenylation 3 region; that stretch reads TYGQLDELSS…GEVEANVQHC (394 aa). One can recognise a Carrier 3 domain in the interval 3422-3498; that stretch reads APSTEEEKKL…DLAKVAVPKS (77 aa). O-(pantetheine 4'-phosphoryl)serine is present on serine 3459. The tract at residues 3541 to 3805 is condensation 3; sequence PGTQAQQFFI…CLNFIPLRVM (265 aa).

The protein belongs to the NRP synthetase family. As to quaternary structure, interacts with the mitogen-activated protein kinase mpkA.

The protein localises to the cytoplasmic vesicle. It participates in alkaloid biosynthesis. In terms of biological role, nonribosomal peptide synthetase; part of the gene cluster that mediates the biosynthesis of the antitumor fumiquinazolines that confer a dual-usage capability to defend against phagocytes in the environment and animal hosts. The simplest member is fumiquinazoline F (FQF) with a 6-6-6 tricyclic core derived from anthranilic acid (Ant), tryptophan (Trp), and alanine (Ala). The trimodular NRPS fmqA is responsible for FQF formation. Modules 1, 2 and 3 of fmqA are predicted to activate and load Ant, Trp and Ala, respectively, providing for the assembly of an Ant-Trp-Ala-S-enzyme intermediate that would undergo double cyclization for chain release and generation of the tricyclic 6-6-6 product fumiquinazoline F. The presence of an E domain predicted for module 2 of fmqA is consistent with epimerization of L-Trp to D-Trp during assembly to generate the R-stereocenter at C14 of FQF. The FAD-dependent monooxygenase fmqB and the monomodular NRPS fmqC then maturate FQF to FQA. FmqB oxidizes the 2',3'-double bond of the indole side chain of FQF, and fmqC activates L-Ala as the adenylate, installs it as the pantetheinyl thioester on its carrier protein domain, and acylates the oxidized indole for subsequent intramolecular cyclization to create the 6-5-5-imidazolindolone of FQA. The FAD-linked oxidoreductase fmqD introduces a third layer of scaffold complexity by converting FQA to the spirohemiaminal FQC, presumably by catalyzing the formation of a transient imine within the pyrazinone ring. FQC subsequently converts nonenzymatically to the known cyclic aminal FQD. The protein is Nonribosomal peptide synthetase fmqA of Aspergillus fumigatus (strain ATCC MYA-4609 / CBS 101355 / FGSC A1100 / Af293) (Neosartorya fumigata).